Here is a 442-residue protein sequence, read N- to C-terminus: ATP-dependent protease ATPase subunit HslU (442 aa).

ATP contacts are provided by residues isoleucine 18, 60–65 (GVGKTE), aspartate 255, glutamate 320, and arginine 392.

The protein belongs to the ClpX chaperone family. HslU subfamily. In terms of assembly, a double ring-shaped homohexamer of HslV is capped on each side by a ring-shaped HslU homohexamer. The assembly of the HslU/HslV complex is dependent on binding of ATP.

The protein localises to the cytoplasm. Its function is as follows. ATPase subunit of a proteasome-like degradation complex; this subunit has chaperone activity. The binding of ATP and its subsequent hydrolysis by HslU are essential for unfolding of protein substrates subsequently hydrolyzed by HslV. HslU recognizes the N-terminal part of its protein substrates and unfolds these before they are guided to HslV for hydrolysis. The polypeptide is ATP-dependent protease ATPase subunit HslU (Shewanella sp. (strain W3-18-1)).